A 701-amino-acid chain; its full sequence is Elongation factor G (701 aa).

A tr-type G domain is found at 8–286 (DRVRNIGIIA…AVVLLLPSPL (279 aa)). GTP is bound by residues 17-24 (AHIDAGKT), 85-89 (DTPGH), and 139-142 (NKMD).

The protein belongs to the TRAFAC class translation factor GTPase superfamily. Classic translation factor GTPase family. EF-G/EF-2 subfamily.

It localises to the cytoplasm. In terms of biological role, catalyzes the GTP-dependent ribosomal translocation step during translation elongation. During this step, the ribosome changes from the pre-translocational (PRE) to the post-translocational (POST) state as the newly formed A-site-bound peptidyl-tRNA and P-site-bound deacylated tRNA move to the P and E sites, respectively. Catalyzes the coordinated movement of the two tRNA molecules, the mRNA and conformational changes in the ribosome. This Herpetosiphon aurantiacus (strain ATCC 23779 / DSM 785 / 114-95) protein is Elongation factor G.